The sequence spans 143 residues: Large ribosomal subunit protein uL11 (143 aa).

It belongs to the universal ribosomal protein uL11 family. As to quaternary structure, part of the ribosomal stalk of the 50S ribosomal subunit. Interacts with L10 and the large rRNA to form the base of the stalk. L10 forms an elongated spine to which L12 dimers bind in a sequential fashion forming a multimeric L10(L12)X complex. One or more lysine residues are methylated.

Its function is as follows. Forms part of the ribosomal stalk which helps the ribosome interact with GTP-bound translation factors. The chain is Large ribosomal subunit protein uL11 from Polynucleobacter asymbioticus (strain DSM 18221 / CIP 109841 / QLW-P1DMWA-1) (Polynucleobacter necessarius subsp. asymbioticus).